The chain runs to 350 residues: L-threonine 3-dehydrogenase (350 aa).

Residue Cys42 participates in Zn(2+) binding. Residues Thr44 and His47 each act as charge relay system in the active site. Zn(2+) contacts are provided by His67, Glu68, Cys97, Cys100, Cys103, and Cys111. NAD(+) contacts are provided by residues Leu179, Glu199, Arg204, 266 to 268, and 291 to 292; these read LGL and IT.

The protein belongs to the zinc-containing alcohol dehydrogenase family. Homotetramer. Zn(2+) is required as a cofactor.

The protein resides in the cytoplasm. It carries out the reaction L-threonine + NAD(+) = (2S)-2-amino-3-oxobutanoate + NADH + H(+). It participates in amino-acid degradation; L-threonine degradation via oxydo-reductase pathway; glycine from L-threonine: step 1/2. Catalyzes the NAD(+)-dependent oxidation of L-threonine to 2-amino-3-ketobutyrate. To a lesser extent, also catalyzes the oxidation of L-serine. In Thermococcus kodakarensis (strain ATCC BAA-918 / JCM 12380 / KOD1) (Pyrococcus kodakaraensis (strain KOD1)), this protein is L-threonine 3-dehydrogenase.